The primary structure comprises 691 residues: Elongation factor G (691 aa).

A tr-type G domain is found at 8–282 (ERVRNIGIAA…AVVNYLPAPV (275 aa)). Residues 17-24 (AHIDAGKT), 81-85 (DTPGH), and 135-138 (NKMD) contribute to the GTP site.

This sequence belongs to the TRAFAC class translation factor GTPase superfamily. Classic translation factor GTPase family. EF-G/EF-2 subfamily.

The protein localises to the cytoplasm. In terms of biological role, catalyzes the GTP-dependent ribosomal translocation step during translation elongation. During this step, the ribosome changes from the pre-translocational (PRE) to the post-translocational (POST) state as the newly formed A-site-bound peptidyl-tRNA and P-site-bound deacylated tRNA move to the P and E sites, respectively. Catalyzes the coordinated movement of the two tRNA molecules, the mRNA and conformational changes in the ribosome. The sequence is that of Elongation factor G from Prochlorococcus marinus (strain NATL1A).